The sequence spans 142 residues: Large ribosomal subunit protein bL17 (142 aa).

The protein belongs to the bacterial ribosomal protein bL17 family. In terms of assembly, part of the 50S ribosomal subunit. Contacts protein L32.

This chain is Large ribosomal subunit protein bL17, found in Chlamydia abortus (strain DSM 27085 / S26/3) (Chlamydophila abortus).